The primary structure comprises 67 residues: DNA gyrase inhibitor YacG (67 aa).

4 residues coordinate Zn(2+): cysteine 9, cysteine 12, cysteine 28, and cysteine 32. Residues 46–67 form a disordered region; it reads RIPSSGDLNDSDDWSEQPLDRQ.

This sequence belongs to the DNA gyrase inhibitor YacG family. Interacts with GyrB. Zn(2+) is required as a cofactor.

In terms of biological role, inhibits all the catalytic activities of DNA gyrase by preventing its interaction with DNA. Acts by binding directly to the C-terminal domain of GyrB, which probably disrupts DNA binding by the gyrase. This chain is DNA gyrase inhibitor YacG, found in Erwinia tasmaniensis (strain DSM 17950 / CFBP 7177 / CIP 109463 / NCPPB 4357 / Et1/99).